The primary structure comprises 173 residues: MTYFVMFLGFCFILGAVAVASNPSPYYGVLGLVVGSVVGCGWLLSLGVSFISLALFLVYLGGMLVVFVYSVSLAADPYPQAWGSWQVVIYGVGLVLVVLVGIVVGDFVGVWNLWVGTVDYGGLGAVRLDFSGVALFYSWGAGLFLVAGWGLLLTLFVVLELVRGLSRGAIRAV.

5 helical membrane-spanning segments follow: residues 1-21 (MTYF…AVAS), 27-47 (YGVL…LSLG), 48-68 (VSFI…VVFV), 87-107 (VVIY…VGDF), and 139-159 (WGAG…FVVL).

It belongs to the complex I subunit 6 family.

It localises to the mitochondrion membrane. It catalyses the reaction a ubiquinone + NADH + 5 H(+)(in) = a ubiquinol + NAD(+) + 4 H(+)(out). In terms of biological role, core subunit of the mitochondrial membrane respiratory chain NADH dehydrogenase (Complex I) that is believed to belong to the minimal assembly required for catalysis. Complex I functions in the transfer of electrons from NADH to the respiratory chain. The immediate electron acceptor for the enzyme is believed to be ubiquinone. The protein is NADH-ubiquinone oxidoreductase chain 6 (MT-ND6) of Struthio camelus (Common ostrich).